Here is a 284-residue protein sequence, read N- to C-terminus: Diaminopimelate epimerase (284 aa).

Asparagine 14 and asparagine 67 together coordinate substrate. Cysteine 76 serves as the catalytic Proton donor. Substrate-binding positions include 77–78 (GN), asparagine 166, asparagine 199, and 217–218 (ER). Cysteine 226 functions as the Proton acceptor in the catalytic mechanism. 227 to 228 (GT) serves as a coordination point for substrate.

This sequence belongs to the diaminopimelate epimerase family. Homodimer.

The protein localises to the cytoplasm. It catalyses the reaction (2S,6S)-2,6-diaminopimelate = meso-2,6-diaminopimelate. It participates in amino-acid biosynthesis; L-lysine biosynthesis via DAP pathway; DL-2,6-diaminopimelate from LL-2,6-diaminopimelate: step 1/1. In terms of biological role, catalyzes the stereoinversion of LL-2,6-diaminopimelate (L,L-DAP) to meso-diaminopimelate (meso-DAP), a precursor of L-lysine and an essential component of the bacterial peptidoglycan. This is Diaminopimelate epimerase from Geobacillus sp. (strain WCH70).